Consider the following 400-residue polypeptide: Dual-specificity RNA methyltransferase RlmN (400 aa).

E125 functions as the Proton acceptor in the catalytic mechanism. Residues 131–372 (ETDRGTLCVS…VRTPRGRDIL (242 aa)) enclose the Radical SAM core domain. An intrachain disulfide couples C138 to C375. [4Fe-4S] cluster is bound by residues C145, C149, and C152. S-adenosyl-L-methionine is bound by residues 201–202 (GE), S233, 255–257 (SLH), and N332. C375 (S-methylcysteine intermediate) is an active-site residue.

The protein belongs to the radical SAM superfamily. RlmN family. The cofactor is [4Fe-4S] cluster.

It localises to the cytoplasm. It carries out the reaction adenosine(2503) in 23S rRNA + 2 reduced [2Fe-2S]-[ferredoxin] + 2 S-adenosyl-L-methionine = 2-methyladenosine(2503) in 23S rRNA + 5'-deoxyadenosine + L-methionine + 2 oxidized [2Fe-2S]-[ferredoxin] + S-adenosyl-L-homocysteine. The enzyme catalyses adenosine(37) in tRNA + 2 reduced [2Fe-2S]-[ferredoxin] + 2 S-adenosyl-L-methionine = 2-methyladenosine(37) in tRNA + 5'-deoxyadenosine + L-methionine + 2 oxidized [2Fe-2S]-[ferredoxin] + S-adenosyl-L-homocysteine. In terms of biological role, specifically methylates position 2 of adenine 2503 in 23S rRNA and position 2 of adenine 37 in tRNAs. m2A2503 modification seems to play a crucial role in the proofreading step occurring at the peptidyl transferase center and thus would serve to optimize ribosomal fidelity. The sequence is that of Dual-specificity RNA methyltransferase RlmN from Bradyrhizobium diazoefficiens (strain JCM 10833 / BCRC 13528 / IAM 13628 / NBRC 14792 / USDA 110).